Reading from the N-terminus, the 424-residue chain is Serine--tRNA ligase (424 aa).

230–232 serves as a coordination point for L-serine; the sequence is TAE. Residue 261-263 coordinates ATP; it reads RAE. Glu-284 is an L-serine binding site. ATP is bound at residue 348–351; it reads EISS. Residue Ser-384 coordinates L-serine.

The protein belongs to the class-II aminoacyl-tRNA synthetase family. Type-1 seryl-tRNA synthetase subfamily. Homodimer. The tRNA molecule binds across the dimer.

It is found in the cytoplasm. It carries out the reaction tRNA(Ser) + L-serine + ATP = L-seryl-tRNA(Ser) + AMP + diphosphate + H(+). The enzyme catalyses tRNA(Sec) + L-serine + ATP = L-seryl-tRNA(Sec) + AMP + diphosphate + H(+). It participates in aminoacyl-tRNA biosynthesis; selenocysteinyl-tRNA(Sec) biosynthesis; L-seryl-tRNA(Sec) from L-serine and tRNA(Sec): step 1/1. In terms of biological role, catalyzes the attachment of serine to tRNA(Ser). Is also able to aminoacylate tRNA(Sec) with serine, to form the misacylated tRNA L-seryl-tRNA(Sec), which will be further converted into selenocysteinyl-tRNA(Sec). The chain is Serine--tRNA ligase from Carboxydothermus hydrogenoformans (strain ATCC BAA-161 / DSM 6008 / Z-2901).